The following is a 159-amino-acid chain: Ribosomal RNA large subunit methyltransferase H (159 aa).

Residues leucine 76, glycine 108, and 127-132 (FSKMTL) contribute to the S-adenosyl-L-methionine site.

Belongs to the RNA methyltransferase RlmH family. Homodimer.

It is found in the cytoplasm. It catalyses the reaction pseudouridine(1915) in 23S rRNA + S-adenosyl-L-methionine = N(3)-methylpseudouridine(1915) in 23S rRNA + S-adenosyl-L-homocysteine + H(+). Its function is as follows. Specifically methylates the pseudouridine at position 1915 (m3Psi1915) in 23S rRNA. This is Ribosomal RNA large subunit methyltransferase H from Bacillus cereus (strain ATCC 10987 / NRS 248).